Consider the following 103-residue polypeptide: Large ribosomal subunit protein bL21 (103 aa).

The protein belongs to the bacterial ribosomal protein bL21 family. As to quaternary structure, part of the 50S ribosomal subunit. Contacts protein L20.

In terms of biological role, this protein binds to 23S rRNA in the presence of protein L20. In Actinobacillus pleuropneumoniae serotype 7 (strain AP76), this protein is Large ribosomal subunit protein bL21.